A 514-amino-acid polypeptide reads, in one-letter code: DNA-(apurinic or apyrimidinic site) endonuclease 2 (514 aa).

Residues asparagine 8 and glutamate 48 each contribute to the Mg(2+) site. The active site involves tyrosine 156. 4 residues coordinate Mg(2+): aspartate 197, asparagine 199, aspartate 303, and histidine 304. Aspartate 197 functions as the Proton donor/acceptor in the catalytic mechanism. Histidine 304 acts as the Proton acceptor in catalysis. The segment at 359–417 is disordered; that stretch reads PSNQTQVHMRKNKARVRSTRSRPSKTGSSRGQKNLMSYFQPSSSGPQTSNLDLPSLGTL. Residues 366–381 are compositionally biased toward basic residues; the sequence is HMRKNKARVRSTRSRP. Lysine 371 participates in a covalent cross-link: Glycyl lysine isopeptide (Lys-Gly) (interchain with G-Cter in ubiquitin). Residues 382–410 show a composition bias toward polar residues; that stretch reads SKTGSSRGQKNLMSYFQPSSSGPQTSNLD. The required for the interaction and colocalization with PCNA in nuclear foci in presence of oxidative-induced DNA damaging agents stretch occupies residues 390–397; it reads QKNLMSYF. 4 residues coordinate Zn(2+): cysteine 465, histidine 468, cysteine 491, and cysteine 505. Residues 465–514 form a GRF-type zinc finger; sequence CGGHREPCVMRTVKKPGPNLGRHFYMCARPQGPPTDPSSRCNFFLWSRPS.

It belongs to the DNA repair enzymes AP/ExoA family. As to quaternary structure, interacts with PCNA; this interaction is triggered by reactive oxygen species and increased by misincorporation of uracil in nuclear DNA. It depends on Mg(2+) as a cofactor. Mn(2+) serves as cofactor. Ubiquitinated by the CUL9-RBX1 complex. Ubiquitinated by MKRN3 at Lys-371 leading to proteasomal degradation.

The protein localises to the nucleus. It is found in the cytoplasm. Its subcellular location is the mitochondrion. It catalyses the reaction Exonucleolytic cleavage in the 3'- to 5'-direction to yield nucleoside 5'-phosphates.. Its activity is regulated as follows. 3'-5' exonuclease activity is activated by sodium and manganese. 3'-5' exonuclease and 3'-phosphodiesterase activities are stimulated in presence of PCNA. In terms of biological role, functions as a weak apurinic/apyrimidinic (AP) endodeoxyribonuclease in the DNA base excision repair (BER) pathway of DNA lesions induced by oxidative and alkylating agents. Initiates repair of AP sites in DNA by catalyzing hydrolytic incision of the phosphodiester backbone immediately adjacent to the damage, generating a single-strand break with 5'-deoxyribose phosphate and 3'-hydroxyl ends. Also displays double-stranded DNA 3'-5' exonuclease, 3'-phosphodiesterase activities. Shows robust 3'-5' exonuclease activity on 3'-recessed heteroduplex DNA and is able to remove mismatched nucleotides preferentially. Shows fairly strong 3'-phosphodiesterase activity involved in the removal of 3'-damaged termini formed in DNA by oxidative agents. In the nucleus functions in the PCNA-dependent BER pathway. Plays a role in reversing blocked 3' DNA ends, problematic lesions that preclude DNA synthesis. Required for somatic hypermutation (SHM) and DNA cleavage step of class switch recombination (CSR) of immunoglobulin genes. Required for proper cell cycle progression during proliferation of peripheral lymphocytes. This Bos taurus (Bovine) protein is DNA-(apurinic or apyrimidinic site) endonuclease 2 (APEX2).